Consider the following 693-residue polypeptide: Polyribonucleotide nucleotidyltransferase (693 aa).

Asp486 and Asp492 together coordinate Mg(2+). A KH domain is found at 553-612; sequence PRFSSMRIDTEKIKDVIGKGGATIRSITEQTGTTIEIEDDGSVKIAATDKAAAANARRLI. The S1 motif domain maps to 622-690; the sequence is GRIYDAKVTK…RQGRVRLSIK (69 aa).

It belongs to the polyribonucleotide nucleotidyltransferase family. As to quaternary structure, component of the RNA degradosome, which is a multiprotein complex involved in RNA processing and mRNA degradation. Mg(2+) is required as a cofactor.

The protein resides in the cytoplasm. It carries out the reaction RNA(n+1) + phosphate = RNA(n) + a ribonucleoside 5'-diphosphate. Its function is as follows. Involved in mRNA degradation. Catalyzes the phosphorolysis of single-stranded polyribonucleotides processively in the 3'- to 5'-direction. This chain is Polyribonucleotide nucleotidyltransferase, found in Dichelobacter nodosus (strain VCS1703A).